Reading from the N-terminus, the 103-residue chain is Small ribosomal subunit protein uS10 (103 aa).

It belongs to the universal ribosomal protein uS10 family. As to quaternary structure, part of the 30S ribosomal subunit.

In terms of biological role, involved in the binding of tRNA to the ribosomes. The protein is Small ribosomal subunit protein uS10 of Shewanella frigidimarina (strain NCIMB 400).